We begin with the raw amino-acid sequence, 874 residues long: Alanine--tRNA ligase (874 aa).

H564, H568, C665, and H669 together coordinate Zn(2+).

This sequence belongs to the class-II aminoacyl-tRNA synthetase family. Requires Zn(2+) as cofactor.

It localises to the cytoplasm. The enzyme catalyses tRNA(Ala) + L-alanine + ATP = L-alanyl-tRNA(Ala) + AMP + diphosphate. In terms of biological role, catalyzes the attachment of alanine to tRNA(Ala) in a two-step reaction: alanine is first activated by ATP to form Ala-AMP and then transferred to the acceptor end of tRNA(Ala). Also edits incorrectly charged Ser-tRNA(Ala) and Gly-tRNA(Ala) via its editing domain. The polypeptide is Alanine--tRNA ligase (Cupriavidus necator (strain ATCC 17699 / DSM 428 / KCTC 22496 / NCIMB 10442 / H16 / Stanier 337) (Ralstonia eutropha)).